Here is a 369-residue protein sequence, read N- to C-terminus: UDP-N-acetylglucosamine--N-acetylmuramyl-(pentapeptide) pyrophosphoryl-undecaprenol N-acetylglucosamine transferase (369 aa).

Residues 15–17 (TGG), Asn126, Arg169, Ser197, and Gln299 contribute to the UDP-N-acetyl-alpha-D-glucosamine site.

It belongs to the glycosyltransferase 28 family. MurG subfamily.

The protein localises to the cell inner membrane. It catalyses the reaction di-trans,octa-cis-undecaprenyl diphospho-N-acetyl-alpha-D-muramoyl-L-alanyl-D-glutamyl-meso-2,6-diaminopimeloyl-D-alanyl-D-alanine + UDP-N-acetyl-alpha-D-glucosamine = di-trans,octa-cis-undecaprenyl diphospho-[N-acetyl-alpha-D-glucosaminyl-(1-&gt;4)]-N-acetyl-alpha-D-muramoyl-L-alanyl-D-glutamyl-meso-2,6-diaminopimeloyl-D-alanyl-D-alanine + UDP + H(+). It participates in cell wall biogenesis; peptidoglycan biosynthesis. Its function is as follows. Cell wall formation. Catalyzes the transfer of a GlcNAc subunit on undecaprenyl-pyrophosphoryl-MurNAc-pentapeptide (lipid intermediate I) to form undecaprenyl-pyrophosphoryl-MurNAc-(pentapeptide)GlcNAc (lipid intermediate II). The polypeptide is UDP-N-acetylglucosamine--N-acetylmuramyl-(pentapeptide) pyrophosphoryl-undecaprenol N-acetylglucosamine transferase (Methylobacterium radiotolerans (strain ATCC 27329 / DSM 1819 / JCM 2831 / NBRC 15690 / NCIMB 10815 / 0-1)).